The following is a 335-amino-acid chain: tRNA N6-adenosine threonylcarbamoyltransferase (335 aa).

Positions 110 and 114 each coordinate Fe cation. Substrate is bound by residues 132–136 (LVSGG), Asp-165, Gly-178, and Asn-271. Position 299 (Asp-299) interacts with Fe cation.

Belongs to the KAE1 / TsaD family. The cofactor is Fe(2+).

It localises to the cytoplasm. The enzyme catalyses L-threonylcarbamoyladenylate + adenosine(37) in tRNA = N(6)-L-threonylcarbamoyladenosine(37) in tRNA + AMP + H(+). Functionally, required for the formation of a threonylcarbamoyl group on adenosine at position 37 (t(6)A37) in tRNAs that read codons beginning with adenine. Is involved in the transfer of the threonylcarbamoyl moiety of threonylcarbamoyl-AMP (TC-AMP) to the N6 group of A37, together with TsaE and TsaB. TsaD likely plays a direct catalytic role in this reaction. This chain is tRNA N6-adenosine threonylcarbamoyltransferase, found in Campylobacter jejuni subsp. jejuni serotype O:2 (strain ATCC 700819 / NCTC 11168).